The chain runs to 148 residues: Ribonuclease H (148 aa).

Residues 1-142 enclose the RNase H type-1 domain; the sequence is MSDSVEMFTD…ADQLANRGVD (142 aa). The Mg(2+) site is built by Asp-10, Glu-48, Asp-70, and Asp-134.

This sequence belongs to the RNase H family. As to quaternary structure, monomer. The cofactor is Mg(2+).

The protein resides in the cytoplasm. The enzyme catalyses Endonucleolytic cleavage to 5'-phosphomonoester.. Its function is as follows. Endonuclease that specifically degrades the RNA of RNA-DNA hybrids. The polypeptide is Ribonuclease H (Pseudomonas putida (strain ATCC 700007 / DSM 6899 / JCM 31910 / BCRC 17059 / LMG 24140 / F1)).